A 329-amino-acid chain; its full sequence is Gibberellin 2-beta-dioxygenase 1 (329 aa).

A Fe2OG dioxygenase domain is found at 165–273 (NTDSILRLNH…RVSMIYFAGP (109 aa)). H197, D199, and H254 together coordinate Fe cation. Residue R264 is part of the active site. Residue R264 coordinates 2-oxoglutarate.

The protein belongs to the iron/ascorbate-dependent oxidoreductase family. GA2OX subfamily. Fe(2+) serves as cofactor. As to expression, preferentially expressed in flowers, siliques, and upper stems. Not expressed in the apex.

It catalyses the reaction gibberellin A1 + 2-oxoglutarate + O2 = gibberellin A8 + succinate + CO2. Its pathway is plant hormone biosynthesis; gibberellin biosynthesis. In terms of biological role, catalyzes the 2-beta-hydroxylation of several biologically active gibberellins, leading to the homeostatic regulation of their endogenous level. Catabolism of gibberellins (GAs) plays a central role in plant development. Converts GA9/GA20 to GA51/GA29 and GA4/GA1 to GA34/GA8. In Arabidopsis thaliana (Mouse-ear cress), this protein is Gibberellin 2-beta-dioxygenase 1 (GA2OX1).